Consider the following 248-residue polypeptide: 1-(5-phosphoribosyl)-5-[(5-phosphoribosylamino)methylideneamino] imidazole-4-carboxamide isomerase (248 aa).

Residue aspartate 8 is the Proton acceptor of the active site. Aspartate 131 (proton donor) is an active-site residue.

The protein belongs to the HisA/HisF family.

It is found in the cytoplasm. The catalysed reaction is 1-(5-phospho-beta-D-ribosyl)-5-[(5-phospho-beta-D-ribosylamino)methylideneamino]imidazole-4-carboxamide = 5-[(5-phospho-1-deoxy-D-ribulos-1-ylimino)methylamino]-1-(5-phospho-beta-D-ribosyl)imidazole-4-carboxamide. It functions in the pathway amino-acid biosynthesis; L-histidine biosynthesis; L-histidine from 5-phospho-alpha-D-ribose 1-diphosphate: step 4/9. The sequence is that of 1-(5-phosphoribosyl)-5-[(5-phosphoribosylamino)methylideneamino] imidazole-4-carboxamide isomerase from Paracidovorax citrulli (strain AAC00-1) (Acidovorax citrulli).